The chain runs to 186 residues: Ribosome-recycling factor (186 aa).

Belongs to the RRF family.

The protein resides in the cytoplasm. Its function is as follows. Responsible for the release of ribosomes from messenger RNA at the termination of protein biosynthesis. May increase the efficiency of translation by recycling ribosomes from one round of translation to another. In Polaromonas naphthalenivorans (strain CJ2), this protein is Ribosome-recycling factor.